A 160-amino-acid chain; its full sequence is Small ribosomal subunit protein uS9 (160 aa).

It belongs to the universal ribosomal protein uS9 family.

The chain is Small ribosomal subunit protein uS9 from Xanthobacter autotrophicus (strain ATCC BAA-1158 / Py2).